The chain runs to 762 residues: cGMP-dependent protein kinase 2 (762 aa).

Residues 1 to 25 (MGNGSVKPKHSKHPDGQSGNLSNEA) are disordered. The N-myristoyl glycine moiety is linked to residue Gly-2. 2 positions are modified to phosphoserine: Ser-110 and Ser-117. Positions 112 to 138 (LVSLHSRRGAKAGVSAEPTSRTYDLNK) are disordered. A cGMP-binding, high affinity; cAMP-binding, moderate affinity region spans residues 168-283 (FLKRLDPQQI…DEEYRNFLRS (116 aa)). Residues 232–235 (GELA), 242–243 (RT), Lys-347, 356–359 (GEKA), 366–367 (RS), Asp-412, and Arg-415 contribute to the 3',5'-cyclic GMP site. The tract at residues 286 to 416 (LLKNLPEDKL…TLNRDDEKRH (131 aa)) is cGMP-binding, high affinity; cAMP-binding, low affinity. Ser-431 bears the Phosphoserine mark. Residues 453-711 (LEIIATLGVG…INDIKKHRWL (259 aa)) form the Protein kinase domain. ATP-binding positions include 459–467 (LGVGGFGRV) and Lys-482. Residue Asp-576 is the Proton acceptor of the active site. Position 609 is a phosphothreonine (Thr-609). One can recognise an AGC-kinase C-terminal domain in the interval 712–762 (NGFNWEGLKARSLPSPLRRELSGPIDHSYFDKYPPEKGVPPDEMSGWDKDF). Positions 740–762 (YFDKYPPEKGVPPDEMSGWDKDF) are disordered.

Belongs to the protein kinase superfamily. AGC Ser/Thr protein kinase family. cGMP subfamily. Interacts with GRIA1/GLUR1. In terms of processing, myristoylation mediates membrane localization. As to expression, highly expressed in intestinal mucosa and is 20 times less abundant in brain and kidney. Expressed in jejunum, in the apical domain of the villus epithelium.

Its subcellular location is the apical cell membrane. The protein localises to the cell membrane. The enzyme catalyses L-seryl-[protein] + ATP = O-phospho-L-seryl-[protein] + ADP + H(+). The catalysed reaction is L-threonyl-[protein] + ATP = O-phospho-L-threonyl-[protein] + ADP + H(+). With respect to regulation, binding of cGMP results in enzyme activation. Crucial regulator of intestinal secretion and bone growth. Phosphorylates and activates CFTR on the plasma membrane. Plays a key role in intestinal secretion by regulating cGMP-dependent translocation of CFTR in jejunum. Acts downstream of NMDAR to activate the plasma membrane accumulation of GRIA1/GLUR1 in synapse and increase synaptic plasticity. Phosphorylates GRIA1/GLUR1 at Ser-863. Acts as regulator of gene expression and activator of the extracellular signal-regulated kinases MAPK3/ERK1 and MAPK1/ERK2 in mechanically stimulated osteoblasts. Under fluid shear stress, mediates ERK activation and subsequent induction of FOS, FOSL1/FRA1, FOSL2/FRA2 and FOSB that play a key role in the osteoblast anabolic response to mechanical stimulation. The chain is cGMP-dependent protein kinase 2 (Prkg2) from Rattus norvegicus (Rat).